A 257-amino-acid polypeptide reads, in one-letter code: Beta-fibrinogenase mucrofibrase-5 (257 aa).

Positions 1 to 18 (MVLIRVLANLLILQLSYA) are cleaved as a signal peptide. Residues 19–24 (QKSSEL) constitute a propeptide that is removed on maturation. The Peptidase S1 domain maps to 25–248 (IIGGDECNIN…HLDWIKGIIA (224 aa)). Intrachain disulfides connect C31–C162, C49–C65, C97–C255, C141–C209, C173–C188, and C199–C224. Residue H64 is the Charge relay system of the active site. An N-linked (GlcNAc...) asparagine glycan is attached at N102. D109 (charge relay system) is an active-site residue. The active-site Charge relay system is S203.

The protein belongs to the peptidase S1 family. Snake venom subfamily. As to quaternary structure, monomer. As to expression, expressed by the venom gland.

It is found in the secreted. Its function is as follows. Snake venom serine protease with strong beta-fibrinogenolytic activities, angiotensin I (AGT)-degrading activities and strong kallikrein-like activities in vitro, releasing bradykinin from kininogen (KNG1). Intravenous injection mildly lowers blood pressure in experimental rats, which may be explained by the action on angiotensin I and kininogen. Exhibits amidase activity against N-benzoyl-Pro-Phe-Arg-p-nitroanilide in vitro. In Protobothrops mucrosquamatus (Taiwan habu), this protein is Beta-fibrinogenase mucrofibrase-5.